Consider the following 547-residue polypeptide: Chaperonin GroEL (547 aa).

ATP-binding positions include 30 to 33, K51, 87 to 91, G415, and D496; these read TLGP and DGTTT.

Belongs to the chaperonin (HSP60) family. Forms a cylinder of 14 subunits composed of two heptameric rings stacked back-to-back. Interacts with the co-chaperonin GroES.

The protein localises to the cytoplasm. It catalyses the reaction ATP + H2O + a folded polypeptide = ADP + phosphate + an unfolded polypeptide.. Its function is as follows. Together with its co-chaperonin GroES, plays an essential role in assisting protein folding. The GroEL-GroES system forms a nano-cage that allows encapsulation of the non-native substrate proteins and provides a physical environment optimized to promote and accelerate protein folding. The protein is Chaperonin GroEL of Chlorobium limicola (strain DSM 245 / NBRC 103803 / 6330).